The sequence spans 255 residues: Adenosylcobinamide-GDP ribazoletransferase (255 aa).

7 consecutive transmembrane segments (helical) span residues 33 to 53, 57 to 77, 107 to 127, 136 to 156, 174 to 194, 196 to 216, and 234 to 254; these read IFLP…IELF, FPGF…SGAL, VGSM…GSYA, FTVL…IYSF, AGLI…AAFF, FSLI…FVVA, and IMEL…NIGV.

This sequence belongs to the CobS family. Mg(2+) is required as a cofactor.

It is found in the cell membrane. It catalyses the reaction alpha-ribazole + adenosylcob(III)inamide-GDP = adenosylcob(III)alamin + GMP + H(+). The enzyme catalyses alpha-ribazole 5'-phosphate + adenosylcob(III)inamide-GDP = adenosylcob(III)alamin 5'-phosphate + GMP + H(+). It participates in cofactor biosynthesis; adenosylcobalamin biosynthesis; adenosylcobalamin from cob(II)yrinate a,c-diamide: step 7/7. In terms of biological role, joins adenosylcobinamide-GDP and alpha-ribazole to generate adenosylcobalamin (Ado-cobalamin). Also synthesizes adenosylcobalamin 5'-phosphate from adenosylcobinamide-GDP and alpha-ribazole 5'-phosphate. This chain is Adenosylcobinamide-GDP ribazoletransferase, found in Carboxydothermus hydrogenoformans (strain ATCC BAA-161 / DSM 6008 / Z-2901).